Reading from the N-terminus, the 315-residue chain is Ribosomal RNA small subunit methyltransferase H (315 aa).

Residues 37-39 (GGH), aspartate 57, aspartate 105, and glutamine 112 contribute to the S-adenosyl-L-methionine site.

Belongs to the methyltransferase superfamily. RsmH family.

Its subcellular location is the cytoplasm. The enzyme catalyses cytidine(1402) in 16S rRNA + S-adenosyl-L-methionine = N(4)-methylcytidine(1402) in 16S rRNA + S-adenosyl-L-homocysteine + H(+). Specifically methylates the N4 position of cytidine in position 1402 (C1402) of 16S rRNA. This chain is Ribosomal RNA small subunit methyltransferase H, found in Nitrosococcus oceani (strain ATCC 19707 / BCRC 17464 / JCM 30415 / NCIMB 11848 / C-107).